The chain runs to 355 residues: 3-dehydroquinate synthase (355 aa).

NAD(+) is bound by residues 67 to 72 (DGEIYK), 101 to 105 (GVIGD), 125 to 126 (TT), lysine 138, lysine 147, and 165 to 168 (FLNT). 3 residues coordinate Zn(2+): glutamate 180, histidine 243, and histidine 260.

Belongs to the sugar phosphate cyclases superfamily. Dehydroquinate synthase family. The cofactor is NAD(+). Co(2+) is required as a cofactor. Zn(2+) serves as cofactor.

It is found in the cytoplasm. It carries out the reaction 7-phospho-2-dehydro-3-deoxy-D-arabino-heptonate = 3-dehydroquinate + phosphate. Its pathway is metabolic intermediate biosynthesis; chorismate biosynthesis; chorismate from D-erythrose 4-phosphate and phosphoenolpyruvate: step 2/7. In terms of biological role, catalyzes the conversion of 3-deoxy-D-arabino-heptulosonate 7-phosphate (DAHP) to dehydroquinate (DHQ). The polypeptide is 3-dehydroquinate synthase (Buchnera aphidicola subsp. Baizongia pistaciae (strain Bp)).